The chain runs to 204 residues: Tumor protein D53 (204 aa).

Positions Met1–Asp20 are disordered. Positions Val22–Met73 form a coiled coil. Residues Ser29, Ser86, Ser122, and Ser131 each carry the phosphoserine modification. At Arg133 the chain carries Omega-N-methylarginine. Thr146 carries the phosphothreonine modification. Ser149 and Ser174 each carry phosphoserine.

The protein belongs to the TPD52 family. As to quaternary structure, forms a homodimer or heterodimer with other members of the family.

This is Tumor protein D53 (TPD52L1) from Homo sapiens (Human).